A 295-amino-acid chain; its full sequence is Urease accessory protein UreD (295 aa).

Belongs to the UreD family. UreD, UreF and UreG form a complex that acts as a GTP-hydrolysis-dependent molecular chaperone, activating the urease apoprotein by helping to assemble the nickel containing metallocenter of UreC. The UreE protein probably delivers the nickel.

Its subcellular location is the cytoplasm. Its function is as follows. Required for maturation of urease via the functional incorporation of the urease nickel metallocenter. In Saccharophagus degradans (strain 2-40 / ATCC 43961 / DSM 17024), this protein is Urease accessory protein UreD.